The sequence spans 279 residues: Odontogenic ameloblast-associated protein (279 aa).

Positions 1–15 (MKIIILLGFLGATLS) are cleaved as a signal peptide. Low complexity predominate over residues 100–123 (AQGAQAGQVDPSQAQTPPQTQPGP). A disordered region spans residues 100–125 (AQGAQAGQVDPSQAQTPPQTQPGPNH). O-linked (GalNAc...) threonine glycans are attached at residues T115 and T119. Residues 127-129 (MPY) are interaction with ARHGEF5. 6 O-linked (GalNAc...) threonine glycosylation sites follow: T168, T244, T250, T251, T255, and T273.

The protein belongs to the ODAM family. In terms of assembly, interacts (via C-terminus) with ARHGEF5. Post-translationally, O-glycosylated.

The protein resides in the secreted. It localises to the cytoplasm. It is found in the nucleus. Tooth-associated epithelia protein that probably plays a role in odontogenesis, the complex process that results in the initiation and generation of the tooth. May be incorporated in the enamel matrix at the end of mineralization process. Involved in the induction of RHOA activity via interaction with ARHGEF and expression of downstream factors such as ROCK. Plays a role in attachment of the junctional epithelium to the tooth surface. In Macaca mulatta (Rhesus macaque), this protein is Odontogenic ameloblast-associated protein (ODAM).